The primary structure comprises 179 residues: MSRIGKKPIPVPEKVAVTLDGLLVTVKGPKGELTRTLPEGVTIDQTDGLIIVSADSEKRKSRERHGLSRTLVANMIEGVNNGYSKQLEIVGVGSRAQVKGKTLVVSAGYSHPVEVIPPEGITFKVENNTNVLVSGIDKELVGNEAAKIRAIRPPEPYKGKGIKYLGERILRKAGKSGKK.

Belongs to the universal ribosomal protein uL6 family. In terms of assembly, part of the 50S ribosomal subunit.

This protein binds to the 23S rRNA, and is important in its secondary structure. It is located near the subunit interface in the base of the L7/L12 stalk, and near the tRNA binding site of the peptidyltransferase center. The polypeptide is Large ribosomal subunit protein uL6 (Prochlorococcus marinus (strain SARG / CCMP1375 / SS120)).